Here is a 296-residue protein sequence, read N- to C-terminus: Homoserine kinase (296 aa).

84-94 (PLARGLGSSSS) contributes to the ATP binding site.

The protein belongs to the GHMP kinase family. Homoserine kinase subfamily.

Its subcellular location is the cytoplasm. The catalysed reaction is L-homoserine + ATP = O-phospho-L-homoserine + ADP + H(+). It participates in amino-acid biosynthesis; L-threonine biosynthesis; L-threonine from L-aspartate: step 4/5. Its function is as follows. Catalyzes the ATP-dependent phosphorylation of L-homoserine to L-homoserine phosphate. In Lactococcus lactis subsp. cremoris (strain SK11), this protein is Homoserine kinase.